The chain runs to 351 residues: MIELRNVTKTYSAKQGGVLALSDINLRVSAGEMFGVIGKSGAGKSTLIRCVNLLERPDKGSVIVDGQVLTTLSSKVLRQARHRMGMVFQHFNLLSARTAYQNIAFPLQLLGKNPTEIRKVVLPLLELTDLTAKINAYPSQLSGGQKQRVAIARALVTNPTVLLCDEMTSALDPETTHSILQLLKNINRELNLSILLITHEMEVIKTVADRVAVLDQGRIVEENDVVSLFKRPKTEIAKKFTHSSIKVKLPEILRNRLQKTTLDEGYALLRIDFTEHTAETPIIDEFIRKFDLQVNILQARLEFLRDDSIGMMLVALRNVKDTLPQGIAYLNEKGLQVEVLGYVSADDWRYR.

Residues 2–241 (IELRNVTKTY…PKTEIAKKFT (240 aa)) enclose the ABC transporter domain. ATP is bound at residue 38-45 (GKSGAGKS).

The protein belongs to the ABC transporter superfamily. Methionine importer (TC 3.A.1.24) family. The complex is composed of two ATP-binding proteins (MetN), two transmembrane proteins (MetI) and a solute-binding protein (MetQ).

The protein resides in the cell inner membrane. The catalysed reaction is L-methionine(out) + ATP + H2O = L-methionine(in) + ADP + phosphate + H(+). It carries out the reaction D-methionine(out) + ATP + H2O = D-methionine(in) + ADP + phosphate + H(+). Its function is as follows. Part of the ABC transporter complex MetNIQ involved in methionine import. Responsible for energy coupling to the transport system. This chain is Methionine import ATP-binding protein MetN, found in Coxiella burnetii (strain RSA 493 / Nine Mile phase I).